A 196-amino-acid polypeptide reads, in one-letter code: DnaA initiator-associating protein DiaA (196 aa).

Residues 34–196 (LVHSLLNGNK…DNTLFPHQDD (163 aa)) form the SIS domain.

The protein belongs to the SIS family. DiaA subfamily. As to quaternary structure, homotetramer; dimer of dimers.

Functionally, required for the timely initiation of chromosomal replication via direct interactions with the DnaA initiator protein. This chain is DnaA initiator-associating protein DiaA, found in Salmonella enteritidis PT4 (strain P125109).